Reading from the N-terminus, the 104-residue chain is Circadian clock oscillator protein KaiB (104 aa).

It belongs to the KaiB family. As to quaternary structure, the KaiABC complex composition changes during the circadian cycle to control KaiC phosphorylation. Complexes KaiC(6), KaiA(2-4):KaiC(6), KaiB(6):KaiC(6) and KaiC(6):KaiB(6):KaiA(12) are among the most important forms, many form cooperatively. Undergoes a major conformational rearrangment; in the free state forms homotetramers as a dimer of dimers. When bound to the CI domain of KaiC switches to a monomeric thioredoxin-fold (KaiB(fs)). KaiB(fs) binds CikA, leading it to dephosphorylate phospho-RpaA.

In terms of biological role, key component of the KaiABC oscillator complex, which constitutes the main circadian regulator in cyanobacteria. Complex composition changes during the circadian cycle to control KaiC phosphorylation. KaiA stimulates KaiC autophosphorylation, while KaiB sequesters KaiA, leading to KaiC autodephosphorylation. Phospho-Ser-431 KaiC accumulation triggers binding of KaiB to form the KaiB(6):KaiC(6) complex, leading to changes in output regulators CikA and SasA. KaiB switches to a thioredoxin-like fold (KaiB(fs)) when bound to KaiC. KaiB(6):KaiC(6) formation exposes a site for KaiA binding that sequesters KaiA from KaiC, making the KaiC(6):KaiB(6):KaiA(12) complex that results in KaiC autodephosphorylation. A metamorphic protein which reversibly switches between an inactive tetrameric fold and a rare, thioredoxin-like monomeric fold (KaiB(fs)). KaiB(fs) binds phospho-KaiC, KaiA and CikA. KaiA and CikA compete for binding to KaiB(fs), and KaiB(fs) and SasA compete for binding to KaiC, thus the clock oscillator and output signal pathway are tightly coupled. This chain is Circadian clock oscillator protein KaiB, found in Parasynechococcus marenigrum (strain WH8102).